Consider the following 140-residue polypeptide: Thioredoxin H9 (140 aa).

G2 is lipidated: N-myristoyl glycine. C4 is lipidated: S-palmitoyl cysteine. S14 bears the Phosphoserine mark. The region spanning 25–129 (VHLITTKESW…PELQKKVTSI (105 aa)) is the Thioredoxin domain. Active-site nucleophile residues include C57 and C60. Cysteines 57 and 60 form a disulfide. At S136 the chain carries Phosphoserine.

Belongs to the thioredoxin family. Plant H-type subfamily. Ubiquitous.

The protein localises to the cell membrane. In terms of biological role, probable thiol-disulfide oxidoreductase that may play a role in intercellular communication due to its ability to move from cell to cell. The protein is Thioredoxin H9 (TRX9) of Arabidopsis thaliana (Mouse-ear cress).